A 31-amino-acid polypeptide reads, in one-letter code: Cytochrome b6-f complex subunit 6 (31 aa).

Residues 4–26 form a helical membrane-spanning segment; the sequence is ITSYFGFLLAASTITPALFIGLS.

Belongs to the PetL family. As to quaternary structure, the 4 large subunits of the cytochrome b6-f complex are cytochrome b6, subunit IV (17 kDa polypeptide, PetD), cytochrome f and the Rieske protein, while the 4 small subunits are PetG, PetL, PetM and PetN. The complex functions as a dimer.

The protein resides in the plastid. It is found in the chloroplast thylakoid membrane. Its function is as follows. Component of the cytochrome b6-f complex, which mediates electron transfer between photosystem II (PSII) and photosystem I (PSI), cyclic electron flow around PSI, and state transitions. PetL is important for photoautotrophic growth as well as for electron transfer efficiency and stability of the cytochrome b6-f complex. In Buxus microphylla (Littleleaf boxwood), this protein is Cytochrome b6-f complex subunit 6.